A 196-amino-acid polypeptide reads, in one-letter code: ATP-dependent Clp protease proteolytic subunit (196 aa).

Ser-101 (nucleophile) is an active-site residue. His-126 is a catalytic residue.

It belongs to the peptidase S14 family. As to quaternary structure, component of the chloroplastic Clp protease core complex.

Its subcellular location is the plastid. The protein resides in the chloroplast stroma. It carries out the reaction Hydrolysis of proteins to small peptides in the presence of ATP and magnesium. alpha-casein is the usual test substrate. In the absence of ATP, only oligopeptides shorter than five residues are hydrolyzed (such as succinyl-Leu-Tyr-|-NHMec, and Leu-Tyr-Leu-|-Tyr-Trp, in which cleavage of the -Tyr-|-Leu- and -Tyr-|-Trp bonds also occurs).. Functionally, cleaves peptides in various proteins in a process that requires ATP hydrolysis. Has a chymotrypsin-like activity. Plays a major role in the degradation of misfolded proteins. The sequence is that of ATP-dependent Clp protease proteolytic subunit from Nasturtium officinale (Watercress).